Reading from the N-terminus, the 370-residue chain is Cathepsin B-like cysteine proteinase 3 (370 aa).

An N-terminal signal peptide occupies residues 1–16; sequence MLKVYFLALFLAGCSA. Positions 17-91 are excised as a propeptide; that stretch reads FVLDEIRGIN…FVRGEIVPEP (75 aa). 6 disulfide bridges follow: Cys-105–Cys-134, Cys-117–Cys-162, Cys-153–Cys-210, Cys-154–Cys-158, Cys-190–Cys-214, and Cys-198–Cys-202. Residue Cys-120 is part of the active site. N-linked (GlcNAc...) asparagine glycosylation is present at Asn-138. Residues His-284 and Asn-304 contribute to the active site.

This sequence belongs to the peptidase C1 family.

The sequence is that of Cathepsin B-like cysteine proteinase 3 (cpr-3) from Caenorhabditis elegans.